We begin with the raw amino-acid sequence, 308 residues long: UDP-N-acetylenolpyruvoylglucosamine reductase (308 aa).

In terms of domain architecture, FAD-binding PCMH-type spans 37 to 201; the sequence is RVGGPAQVLF…TQATFRGTPG (165 aa). Residue arginine 181 is part of the active site. A compositionally biased stretch (polar residues) spans 216–233; that stretch reads SREATQPIKSRTGGSTFK. The interval 216-236 is disordered; sequence SREATQPIKSRTGGSTFKNPP. The active-site Proton donor is serine 230. The active site involves glutamate 300.

This sequence belongs to the MurB family. FAD serves as cofactor.

The protein resides in the cytoplasm. The catalysed reaction is UDP-N-acetyl-alpha-D-muramate + NADP(+) = UDP-N-acetyl-3-O-(1-carboxyvinyl)-alpha-D-glucosamine + NADPH + H(+). It functions in the pathway cell wall biogenesis; peptidoglycan biosynthesis. Functionally, cell wall formation. This chain is UDP-N-acetylenolpyruvoylglucosamine reductase, found in Azorhizobium caulinodans (strain ATCC 43989 / DSM 5975 / JCM 20966 / LMG 6465 / NBRC 14845 / NCIMB 13405 / ORS 571).